A 29-amino-acid polypeptide reads, in one-letter code: Varv peptide D (29 aa).

Residues 1-29 (GLPICGETCVGGSCNTPGCSCSWPVCTRN) constitute a cross-link (cyclopeptide (Gly-Asn)). 3 disulfide bridges follow: Cys-5/Cys-19, Cys-9/Cys-21, and Cys-14/Cys-26.

This is a cyclic peptide.

Probably participates in a plant defense mechanism. The polypeptide is Varv peptide D (Viola arvensis (European field pansy)).